The chain runs to 90 residues: Sec-independent protein translocase protein TatA (90 aa).

Residues 2-22 (GVGGISIWQLLIVLVIILLLF) traverse the membrane as a helical segment. 2 stretches are compositionally biased toward basic and acidic residues: residues 45-68 (LRDE…HKAE) and 76-90 (ADAD…DEHK). The segment at 45–90 (LRDEERRDAEEAATIEHKQAHKAENPSQRQQADADFKIKSGNDEHK) is disordered.

Belongs to the TatA/E family. As to quaternary structure, the Tat system comprises two distinct complexes: a TatABC complex, containing multiple copies of TatA, TatB and TatC subunits, and a separate TatA complex, containing only TatA subunits. Substrates initially bind to the TatABC complex, which probably triggers association of the separate TatA complex to form the active translocon.

The protein localises to the cell inner membrane. In terms of biological role, part of the twin-arginine translocation (Tat) system that transports large folded proteins containing a characteristic twin-arginine motif in their signal peptide across membranes. TatA could form the protein-conducting channel of the Tat system. This Nitrosococcus oceani (strain ATCC 19707 / BCRC 17464 / JCM 30415 / NCIMB 11848 / C-107) protein is Sec-independent protein translocase protein TatA.